An 802-amino-acid polypeptide reads, in one-letter code: Phenylalanine--tRNA ligase beta subunit (802 aa).

Positions 40–155 (SASLKNVVVG…AHVETGVNAI (116 aa)) constitute a tRNA-binding domain. Residues 409 to 484 (KAVNKIETSL…RIYGYDEIPV (76 aa)) enclose the B5 domain. The Mg(2+) site is built by D462, D468, E471, and E472. In terms of domain architecture, FDX-ACB spans 709 to 802 (PRYPEMTRDL…LQEKLNAIIR (94 aa)).

This sequence belongs to the phenylalanyl-tRNA synthetase beta subunit family. Type 1 subfamily. In terms of assembly, tetramer of two alpha and two beta subunits. Mg(2+) serves as cofactor.

It localises to the cytoplasm. The enzyme catalyses tRNA(Phe) + L-phenylalanine + ATP = L-phenylalanyl-tRNA(Phe) + AMP + diphosphate + H(+). In Listeria monocytogenes serovar 1/2a (strain ATCC BAA-679 / EGD-e), this protein is Phenylalanine--tRNA ligase beta subunit.